Here is a 215-residue protein sequence, read N- to C-terminus: MOB kinase activator-like 1A (215 aa).

The disordered stretch occupies residues 1-27 (MSLFGLGRNQKTFRPKKSAPSGSKGAQ). Zn(2+) contacts are provided by Cys-79, Cys-84, His-161, and His-166.

This sequence belongs to the MOB1/phocein family. As to quaternary structure, interacts with SIK1 at the plasma membrane and in the nucleus. As to expression, constitutively expressed. In 3- to 4-day-old seedlings, expression is high in the shoot apical meristem and along the vasculature in cotyledons, hypocotyls and roots. At the root tip, expression is detected in columella and lateral root cap cells as well as in the stem cell niche around the quiescent center (QC). The levels of expression decrease progressively in the meristematic zone from the root tip towards the base of the root, becoming stronger again in the elongation zone. In flowers, expression appears localized in ovules and pollen.

It localises to the nucleus. It is found in the cell membrane. Its subcellular location is the vacuole membrane. In terms of biological role, plays a key role in regulation of cell expansion and cell division. Required for proper plant development, the correct patterning of the root meristem and the control of root growth. Involved in both sporogenesis and gametogenesis. In Arabidopsis thaliana (Mouse-ear cress), this protein is MOB kinase activator-like 1A.